The sequence spans 294 residues: 33 kDa chaperonin (294 aa).

Intrachain disulfides connect cysteine 236–cysteine 238 and cysteine 269–cysteine 272.

This sequence belongs to the HSP33 family. Under oxidizing conditions two disulfide bonds are formed involving the reactive cysteines. Under reducing conditions zinc is bound to the reactive cysteines and the protein is inactive.

The protein localises to the cytoplasm. Redox regulated molecular chaperone. Protects both thermally unfolding and oxidatively damaged proteins from irreversible aggregation. Plays an important role in the bacterial defense system toward oxidative stress. The polypeptide is 33 kDa chaperonin (Desulfotalea psychrophila (strain LSv54 / DSM 12343)).